A 168-amino-acid polypeptide reads, in one-letter code: Peptidyl-prolyl cis-trans isomerase-like 3 (168 aa).

The region spanning 1-156 (MSVTLHTNVG…SEIRMTGVTV (156 aa)) is the PPIase cyclophilin-type domain.

It belongs to the cyclophilin-type PPIase family. PPIL3 subfamily.

It catalyses the reaction [protein]-peptidylproline (omega=180) = [protein]-peptidylproline (omega=0). PPIases accelerate the folding of proteins. It catalyzes the cis-trans isomerization of proline imidic peptide bonds in oligopeptides. The polypeptide is Peptidyl-prolyl cis-trans isomerase-like 3 (CYP10) (Mycosarcoma maydis (Corn smut fungus)).